We begin with the raw amino-acid sequence, 735 residues long: 2-5A-dependent ribonuclease (735 aa).

Residues methionine 1–threonine 21 are disordered. 9 ANK repeats span residues glutamate 24 to alanine 53, tryptophan 58 to arginine 87, asparagine 91 to glutamate 120, asparagine 124 to leucine 153, glycine 167 to alanine 197, methionine 201 to valine 234, arginine 238 to alanine 268, glutamate 272 to aspartate 301, and leucine 303 to threonine 328. The binding to TMEV Leader protein stretch occupies residues aspartate 26–alanine 51. 2-5A binding (P-loop) stretches follow at residues glycine 229–proline 242 and glycine 253–threonine 275. Positions isoleucine 364–phenylalanine 584 constitute a Protein kinase domain. The segment at cysteine 401–cysteine 436 adopts a C6-type zinc-finger fold. The 136-residue stretch at tryptophan 587 to leucine 722 folds into the KEN domain. The tract at residues histidine 714–serine 735 is disordered.

Belongs to the protein kinase superfamily. In terms of assembly, (Microbial infection) Interacts (via N-terminus) with TMEV leader protein; this interaction prevents RNASEL activation by its substrate 2'-5' oligoadenylates. As to quaternary structure, monomer (inactive form) or homodimer. Interacts with ABCE1; this interaction inhibits the RNASEL. Mn(2+) serves as cofactor. The cofactor is Mg(2+). Expressed in spleen, thymus, lung, testis, kidney, liver and heart.

It localises to the cytoplasm. The protein localises to the mitochondrion. After binding to 2-5A (5'-phosphorylated 2',5'-linked oligoadenylates) the homodimerization and subsequent activation occurs. Inhibited by RNASEL inhibitor ABCE1/RLI, a cytoplasmic member of the ATP-binding cassette (ABC) transporter family. Its function is as follows. Endoribonuclease that functions in the interferon (IFN) antiviral response. In INF treated and virus infected cells, RNASEL probably mediates its antiviral effects through a combination of direct cleavage of single-stranded viral RNAs, inhibition of protein synthesis through the degradation of rRNA, induction of apoptosis, and induction of other antiviral genes. RNASEL mediated apoptosis is the result of a JNK-dependent stress-response pathway leading to cytochrome c release from mitochondria and caspase-dependent apoptosis. Therefore, activation of RNASEL could lead to elimination of virus infected cells under some circumstances. In the crosstalk between autophagy and apoptosis proposed to induce autophagy as an early stress response to small double-stranded RNA and at later stages of prolonged stress to activate caspase-dependent proteolytic cleavage of BECN1 to terminate autophagy and promote apoptosis. Might play a central role in the regulation of mRNA turnover. Cleaves 3' of UpNp dimers, with preference for UU and UA sequences, to sets of discrete products ranging from between 4 and 22 nucleotides in length. This is 2-5A-dependent ribonuclease (Rnasel) from Mus musculus (Mouse).